Reading from the N-terminus, the 65-residue chain is Alpha-conotoxin BnIA (65 aa).

Positions 1–21 (MGMRMMFTMFLLVVLATTVVS) are cleaved as a signal peptide. The propeptide occupies 22-48 (FASDRASDGRNAAAKDKASDLVALTVK). Cystine bridges form between C50/C56 and C51/C64. The ser-Xaa-Pro motif, crucial for potent interaction with nAChR stretch occupies residues 52 to 54 (SHP). Residue C64 is modified to Cysteine amide.

This sequence belongs to the conotoxin A superfamily. In terms of tissue distribution, expressed by the venom duct.

Its subcellular location is the secreted. Alpha-conotoxins act on postsynaptic membranes, they bind to the nicotinic acetylcholine receptors (nAChR) and thus inhibit them. This toxin inhibits acetylcholine-evoked currents reversibly in oocytes expressing the human alpha-7/CHRNA7 nAChR, and blocks nerve-evoked skeletal muscle contractions in isolated mouse neuromuscular preparations, but with a very low affinity. The chain is Alpha-conotoxin BnIA from Conus bandanus (Banded marble cone).